A 378-amino-acid polypeptide reads, in one-letter code: O-glycoside alpha-1,2-mannosyltransferase homolog 3 (378 aa).

The Cytoplasmic portion of the chain corresponds to 1 to 6; the sequence is MGIPKS. Residues 7-24 traverse the membrane as a helical; Signal-anchor for type II membrane protein segment; sequence SIYFCILLFCIISFYLQS. Residues 25 to 378 lie on the Lumenal side of the membrane; that stretch reads SKDGPKELKV…AIKWLENINS (354 aa). Residue E276 is the Nucleophile of the active site.

The protein belongs to the glycosyltransferase 15 family.

Its subcellular location is the endoplasmic reticulum membrane. It localises to the golgi apparatus membrane. Its function is as follows. Probable mannosyltransferase involved in O-glycosylation of cell wall and secreted proteins. This Schizosaccharomyces pombe (strain 972 / ATCC 24843) (Fission yeast) protein is O-glycoside alpha-1,2-mannosyltransferase homolog 3 (omh3).